The primary structure comprises 110 residues: UPF0145 protein Blon_0093/BLIJ_0092 (110 aa).

This sequence belongs to the UPF0145 family.

This Bifidobacterium longum subsp. infantis (strain ATCC 15697 / DSM 20088 / JCM 1222 / NCTC 11817 / S12) protein is UPF0145 protein Blon_0093/BLIJ_0092.